The sequence spans 226 residues: CASP-like protein 2BC1 (226 aa).

The Cytoplasmic segment spans residues 1 to 37 (MRKHIDIVFSRLSGPILNPPPDNNVIPKTDRKLRITE). A helical transmembrane segment spans residues 38-58 (VILRFAVVIFALVSAIMVGTA). Topologically, residues 59–78 (SGTRDLGGGIRIHAHFTLLK) are extracellular. A helical transmembrane segment spans residues 79 to 99 (TLPFLVIVDGILAVYSLLQGL). The Cytoplasmic portion of the chain corresponds to 100 to 114 (RCFLSLYMRHILLNK). Residues 115-135 (ALAWTIFCCDQALAYVIFAAA) traverse the membrane as a helical segment. Over 136–170 (ASTAETAYISEQGLDELQWIKVCMFFRAYCFKSGA) the chain is Extracellular. The chain crosses the membrane as a helical span at residues 171-191 (GMINAFLAALCMVFVSGMSVF). The Cytoplasmic segment spans residues 192–226 (HLFRLYGEKRAYGHIAEQVVISEEAAERRNSLNGI).

This sequence belongs to the Casparian strip membrane proteins (CASP) family. Homodimer and heterodimers.

It is found in the cell membrane. This chain is CASP-like protein 2BC1, found in Picea sitchensis (Sitka spruce).